A 219-amino-acid polypeptide reads, in one-letter code: Large ribosomal subunit protein uL4 (219 aa).

The tract at residues 43–101 (AAARQGTHKTKRRGEVRGGGKKPYRQKGTGRARQGSTRAPQFAGGGVVHGPQPRDYSQR) is disordered. The span at 61-72 (GGKKPYRQKGTG) shows a compositional bias: basic residues.

This sequence belongs to the universal ribosomal protein uL4 family. Part of the 50S ribosomal subunit.

Its function is as follows. One of the primary rRNA binding proteins, this protein initially binds near the 5'-end of the 23S rRNA. It is important during the early stages of 50S assembly. It makes multiple contacts with different domains of the 23S rRNA in the assembled 50S subunit and ribosome. In terms of biological role, forms part of the polypeptide exit tunnel. The chain is Large ribosomal subunit protein uL4 from Streptomyces coelicolor (strain ATCC BAA-471 / A3(2) / M145).